We begin with the raw amino-acid sequence, 432 residues long: Adenylosuccinate synthetase (432 aa).

Residues 12-18 (GDEGKGK) and 40-42 (GHT) each bind GTP. Aspartate 13 (proton acceptor) is an active-site residue. Residues aspartate 13 and glycine 40 each coordinate Mg(2+). IMP-binding positions include 13–16 (DEGK), 38–41 (NAGH), threonine 132, arginine 146, glutamine 226, threonine 241, and arginine 305. The active-site Proton donor is histidine 41. 301–307 (TVTGRKR) is a substrate binding site. Residues arginine 307, 333–335 (KLD), and 415–417 (STS) each bind GTP.

The protein belongs to the adenylosuccinate synthetase family. In terms of assembly, homodimer. Mg(2+) is required as a cofactor.

It localises to the cytoplasm. It carries out the reaction IMP + L-aspartate + GTP = N(6)-(1,2-dicarboxyethyl)-AMP + GDP + phosphate + 2 H(+). Its pathway is purine metabolism; AMP biosynthesis via de novo pathway; AMP from IMP: step 1/2. Its function is as follows. Plays an important role in the de novo pathway of purine nucleotide biosynthesis. Catalyzes the first committed step in the biosynthesis of AMP from IMP. The polypeptide is Adenylosuccinate synthetase (Sinorhizobium medicae (strain WSM419) (Ensifer medicae)).